A 117-amino-acid polypeptide reads, in one-letter code: Large ribosomal subunit protein bL17 (117 aa).

Belongs to the bacterial ribosomal protein bL17 family. Part of the 50S ribosomal subunit. Contacts protein L32.

The protein is Large ribosomal subunit protein bL17 of Campylobacter lari (strain RM2100 / D67 / ATCC BAA-1060).